The primary structure comprises 330 residues: Aspartate--ammonia ligase (330 aa).

Belongs to the class-II aminoacyl-tRNA synthetase family. AsnA subfamily.

The protein resides in the cytoplasm. It carries out the reaction L-aspartate + NH4(+) + ATP = L-asparagine + AMP + diphosphate + H(+). Its pathway is amino-acid biosynthesis; L-asparagine biosynthesis; L-asparagine from L-aspartate (ammonia route): step 1/1. In Aeromonas salmonicida (strain A449), this protein is Aspartate--ammonia ligase.